Reading from the N-terminus, the 529-residue chain is Probable alpha-galactosidase A (529 aa).

A signal peptide spans 1-19 (MKALFAAITMAHALLQTQA). A disulfide bridge links Cys42 with Cys74. 4 N-linked (GlcNAc...) asparagine glycosylation sites follow: Asn45, Asn83, Asn89, and Asn119. Cys122 and Cys152 are oxidised to a cystine. Asp150 (nucleophile) is an active-site residue. Asn199 carries an N-linked (GlcNAc...) asparagine glycan. Asp208 serves as the catalytic Proton donor. N-linked (GlcNAc...) asparagine glycosylation occurs at Asn351. A Ricin B-type lectin domain is found at 408-528 (RVDAVSTGIV…GLPSGVRVSG (121 aa)). 2 cysteine pairs are disulfide-bonded: Cys425/Cys438 and Cys462/Cys475.

Belongs to the glycosyl hydrolase 27 family.

Its subcellular location is the secreted. It carries out the reaction Hydrolysis of terminal, non-reducing alpha-D-galactose residues in alpha-D-galactosides, including galactose oligosaccharides, galactomannans and galactolipids.. Its function is as follows. Hydrolyzes a variety of simple alpha-D-galactoside as well as more complex molecules such as oligosaccharides and polysaccharides. This Aspergillus terreus (strain NIH 2624 / FGSC A1156) protein is Probable alpha-galactosidase A (aglA).